Here is a 124-residue protein sequence, read N- to C-terminus: MNAVAQAATPDVNEVPAPLVFTDSAADKVKQLIEEEGNPELKLRVFVQGGGCSGFQYGFTFDEETNEDDTTMTKNGVSLLIDSMSYQYLVGAEIDYKEDINGAQFVIKNPNASTTCGCGSSFSV.

Iron-sulfur cluster-binding residues include Cys-52, Cys-116, and Cys-118.

It belongs to the HesB/IscA family. Homodimer. Iron-sulfur cluster serves as cofactor.

Functionally, required for insertion of 4Fe-4S clusters. This chain is Putative iron-sulfur cluster insertion protein ErpA, found in Ralstonia pickettii (strain 12J).